The following is a 545-amino-acid chain: MRNGRTLLRWAGVLAATAIIGVGGFWSQGTTKALPEGPGEKRADLIEIGAMERFGKLDLPKVAFRHDQHTTAVTGMGKDCAACHKSKDGKMSLKFMRLDDNSAAELKEIYHANCIGCHTDLAKAGKKTGPQDGECRSCHNPKPSAASSWKEIGFDKSLHYRHVASKAIKPVGDPQKNCGACHHVYDEASKKLVWGKNKEDSCRACHGEKPVDKRPALDTAAHTACISCHMDVAKTKAETGPVNCAGCHAPEAQAKFKVVREVPRLDRGQPDAALILPVPGKDAPREMKGTMKPVAFDHKAHEAKANDCRTCHHVRIDTCTACHTVNGTADSKFVQLEKAMHQPDSMRSCVGCHNTRVQQPTCAGCHGFIKPTKSDAQCGVCHVAAPGFDAKQVEAGALLNLKAEQRSQVAASMLSARPQPKGTFDLNDIPEKVVIGSIAKEYQPSEFPHRKIVKTLIAGIGEDKLAATFHIEKGTLCQGCHHNSPASLTPPKCASCHGKPFDADRGDRPGLKAAYHQQCMGCHDRMKIEKPANTACVDCHKERAK.

Positions 1-31 (MRNGRTLLRWAGVLAATAIIGVGGFWSQGTT) are cleaved as a signal peptide. Histidine 66, histidine 69, cysteine 80, cysteine 83, histidine 84, histidine 111, cysteine 114, cysteine 117, histidine 118, cysteine 135, cysteine 138, histidine 139, histidine 159, histidine 162, cysteine 178, cysteine 181, histidine 182, histidine 183, cysteine 202, cysteine 205, histidine 206, histidine 222, cysteine 225, cysteine 228, histidine 229, cysteine 244, cysteine 247, histidine 248, histidine 298, histidine 301, cysteine 308, cysteine 311, histidine 312, histidine 313, cysteine 319, cysteine 322, histidine 323, histidine 341, cysteine 349, cysteine 352, histidine 353, cysteine 362, cysteine 365, histidine 366, cysteine 378, cysteine 381, histidine 382, histidine 449, histidine 470, cysteine 477, cysteine 480, histidine 481, histidine 482, cysteine 493, cysteine 496, histidine 497, histidine 516, cysteine 519, cysteine 522, histidine 523, cysteine 536, cysteine 539, and histidine 540 together coordinate heme c.

As to quaternary structure, monomer. Binds 16 heme c groups per subunit. High-spin heme 15 has single axial histidine ligand and the other hemes are low-spin bis-histidinyl coordinated.

It is found in the periplasm. HMWC (high-molecular-weight cytochrome c), ORF2, ORF3, ORF4, ORF5 and ORF6 in the HMC operon form a transmembrane protein complex that allows electron flow from the periplasmic hydrogenase to the cytoplasmic enzymes that catalyze reduction of sulfates. This Nitratidesulfovibrio vulgaris (strain ATCC 29579 / DSM 644 / CCUG 34227 / NCIMB 8303 / VKM B-1760 / Hildenborough) (Desulfovibrio vulgaris) protein is High-molecular-weight cytochrome c (hmcA).